A 447-amino-acid polypeptide reads, in one-letter code: Glutamate-1-semialdehyde 2,1-aminomutase (447 aa).

K277 bears the N6-(pyridoxal phosphate)lysine mark.

It belongs to the class-III pyridoxal-phosphate-dependent aminotransferase family. HemL subfamily. As to quaternary structure, homodimer. Requires pyridoxal 5'-phosphate as cofactor.

The protein localises to the cytoplasm. The catalysed reaction is (S)-4-amino-5-oxopentanoate = 5-aminolevulinate. It participates in porphyrin-containing compound metabolism; protoporphyrin-IX biosynthesis; 5-aminolevulinate from L-glutamyl-tRNA(Glu): step 2/2. This chain is Glutamate-1-semialdehyde 2,1-aminomutase, found in Arthrobacter sp. (strain FB24).